We begin with the raw amino-acid sequence, 680 residues long: Oligopeptidase A (680 aa).

Residue H469 participates in Zn(2+) binding. The active site involves E470. 2 residues coordinate Zn(2+): H473 and H476.

This sequence belongs to the peptidase M3 family. Zn(2+) serves as cofactor.

The enzyme catalyses Hydrolysis of oligopeptides, with broad specificity. Gly or Ala commonly occur as P1 or P1' residues, but more distant residues are also important, as is shown by the fact that Z-Gly-Pro-Gly-|-Gly-Pro-Ala is cleaved, but not Z-(Gly)(5).. Functionally, may play a specific role in the degradation of signal peptides after they are released from precursor forms of secreted proteins. Can cleave N-acetyl-L-Ala(4). The sequence is that of Oligopeptidase A (prlC) from Escherichia coli (strain K12).